The sequence spans 67 residues: Large ribosomal subunit protein bL35 (67 aa).

The protein belongs to the bacterial ribosomal protein bL35 family.

In Rhizobium etli (strain ATCC 51251 / DSM 11541 / JCM 21823 / NBRC 15573 / CFN 42), this protein is Large ribosomal subunit protein bL35.